The sequence spans 218 residues: Large ribosomal subunit protein uL3 (218 aa).

Residues Lys124 to Ala162 form a disordered region.

Belongs to the universal ribosomal protein uL3 family. In terms of assembly, part of the 50S ribosomal subunit. Forms a cluster with proteins L14 and L19.

Functionally, one of the primary rRNA binding proteins, it binds directly near the 3'-end of the 23S rRNA, where it nucleates assembly of the 50S subunit. The protein is Large ribosomal subunit protein uL3 of Synechococcus sp. (strain CC9605).